A 338-amino-acid chain; its full sequence is 4-hydroxythreonine-4-phosphate dehydrogenase (338 aa).

Histidine 136 and threonine 137 together coordinate substrate. Histidine 173, histidine 218, and histidine 273 together coordinate a divalent metal cation. Residues lysine 281, asparagine 290, and arginine 299 each contribute to the substrate site.

The protein belongs to the PdxA family. In terms of assembly, homodimer. Zn(2+) is required as a cofactor. It depends on Mg(2+) as a cofactor. Requires Co(2+) as cofactor.

The protein resides in the cytoplasm. It catalyses the reaction 4-(phosphooxy)-L-threonine + NAD(+) = 3-amino-2-oxopropyl phosphate + CO2 + NADH. The protein operates within cofactor biosynthesis; pyridoxine 5'-phosphate biosynthesis; pyridoxine 5'-phosphate from D-erythrose 4-phosphate: step 4/5. Functionally, catalyzes the NAD(P)-dependent oxidation of 4-(phosphooxy)-L-threonine (HTP) into 2-amino-3-oxo-4-(phosphooxy)butyric acid which spontaneously decarboxylates to form 3-amino-2-oxopropyl phosphate (AHAP). In Ralstonia nicotianae (strain ATCC BAA-1114 / GMI1000) (Ralstonia solanacearum), this protein is 4-hydroxythreonine-4-phosphate dehydrogenase.